Reading from the N-terminus, the 510-residue chain is NAD(P)H-quinone oxidoreductase subunit 2 A, chloroplastic (510 aa).

Transmembrane regions (helical) follow at residues Leu24 to Leu44, Trp59 to Trp79, Ile99 to Ile119, Met124 to Cys144, Leu149 to Tyr169, Tyr183 to Gly203, Ile229 to Phe249, Trp295 to Ile315, Met323 to Asp343, Gly347 to Ala367, Ala395 to Phe415, Leu418 to Leu438, and Met484 to Ile504.

Belongs to the complex I subunit 2 family. As to quaternary structure, NDH is composed of at least 16 different subunits, 5 of which are encoded in the nucleus.

It localises to the plastid. The protein localises to the chloroplast thylakoid membrane. It catalyses the reaction a plastoquinone + NADH + (n+1) H(+)(in) = a plastoquinol + NAD(+) + n H(+)(out). The enzyme catalyses a plastoquinone + NADPH + (n+1) H(+)(in) = a plastoquinol + NADP(+) + n H(+)(out). Its function is as follows. NDH shuttles electrons from NAD(P)H:plastoquinone, via FMN and iron-sulfur (Fe-S) centers, to quinones in the photosynthetic chain and possibly in a chloroplast respiratory chain. The immediate electron acceptor for the enzyme in this species is believed to be plastoquinone. Couples the redox reaction to proton translocation, and thus conserves the redox energy in a proton gradient. This chain is NAD(P)H-quinone oxidoreductase subunit 2 A, chloroplastic, found in Amborella trichopoda.